The following is a 311-amino-acid chain: CD-NTase-associated protein 6 (311 aa).

ATP is bound by residues 84 to 89 and 215 to 216; these read GSGKTE and RR.

It belongs to the AAA ATPase family. Homohexamer. Forms a 1:1:6 CdnC:Cap7:Cap6 complex.

Regulates complex assembly in a CBASS antivirus system. CBASS (cyclic oligonucleotide-based antiphage signaling system) provides immunity against bacteriophage. The CD-NTase protein synthesizes cyclic nucleotides in response to infection; these serve as specific second messenger signals. The signals activate a diverse range of effectors, leading to bacterial cell death and thus abortive phage infection. A type III-C(AAA) CBASS system. Its function is as follows. Binds and disassembles an active CdnC:Cap7 (Cap7 is also called HORMA) complex, inhibiting the complex's ability to synthesize cyclic nucleotide second messengers. An AAA+-ATPase remodeler, in the absence of foreign threat Cap6 (also called Trip13) probably maintains the Cap7 protein in its open, inactive state. Once activated (presumably by a bacteriophage protein) Cap7 binds to and activates its cognate CD-NTase (CdnC in this bacteria) to synthesize cAAA, a cyclic nucleotide second messenger. cAAA activates the NucC endonuclease which degrades all DNA in the infected cell, causing cell death and abortive phage infection. Functionally, protects E.coli strain JP313 against bacteriophage lambda cI- infection. When the cdnC-cap7-cap6-nucC operon is transformed into a susceptible E.coli strain it confers bacteriophage lambda cI- immunity. Mutations in the sensor (Cap7 also called HORMA) or effector proteins (CdnC, NucC) but not the disassembly protein (Cap6 also called Trip13) no longer confer immunity. The presence of the intact operon leads to culture collapse and cell death, which occurs before the phage has finished its replication cycle, thus protecting non-infected bacteria by aborting the phage infection and preventing its propagation. This is CD-NTase-associated protein 6 from Escherichia coli (strain MS 115-1).